A 202-amino-acid chain; its full sequence is Protein Mbar_A1807 (202 aa).

Positions 5–196 constitute an AMMECR1 domain; sequence VEGRAAVKLA…EKEPCGEVLE (192 aa).

This Methanosarcina barkeri (strain Fusaro / DSM 804) protein is Protein Mbar_A1807.